A 97-amino-acid chain; its full sequence is F-actin-capping protein subunit beta (97 aa).

Disordered regions lie at residues 1 to 27 and 43 to 66; these read RLPP…AMPS and KSGS…ETVS. Residues 43-57 are compositionally biased toward polar residues; it reads KSGSGTMNLGGSLTR. At Lys97 the chain carries N6-acetyllysine.

It belongs to the F-actin-capping protein beta subunit family. In terms of assembly, component of the F-actin capping complex, composed of a heterodimer of an alpha and a beta subunit. Subunit of dynactin, a multiprotein complex part of a tripartite complex with dynein and a adapter, such as BICDL1, BICD2 or HOOK3. The dynactin complex is built around ACTR1A/ACTB filament and consists of an actin-related filament composed of a shoulder domain, a pointed end and a barbed end. Its length is defined by its flexible shoulder domain. The soulder is composed of 2 DCTN1 subunits, 4 DCTN2 and 2 DCTN3. The 4 DCNT2 (via N-terminus) bind the ACTR1A filament and act as molecular rulers to determine the length. The pointed end is important for binding dynein-dynactin cargo adapters. Consists of 4 subunits: ACTR10, DCNT4, DCTN5 and DCTN6. The barbed end is composed of a CAPZA1:CAPZB heterodimers, which binds ACTR1A/ACTB filament and dynactin and stabilizes dynactin. Interacts with ARHGAP17. Interaction with RCSD1/CAPZIP. Component of the WASH complex, composed of F-actin-capping protein subunit alpha (CAPZA1, CAPZA2 or CAPZA3), F-actin-capping protein subunit beta (CAPZB), WASH (WASHC1, WASH2P, WASH3P, WASH4P, WASH5P or WASH6P), WASHC2 (WASHC2A or WASHC2C), WASHC3, WASHC4 and WASHC5. Interacts with ACTG1. Directly interacts with CRACD; this interaction decreases binding to actin.

It localises to the cytoplasm. It is found in the cytoskeleton. Its subcellular location is the myofibril. The protein localises to the sarcomere. Functionally, F-actin-capping proteins bind in a Ca(2+)-independent manner to the fast growing ends of actin filaments (barbed end) thereby blocking the exchange of subunits at these ends. Unlike other capping proteins (such as gelsolin and severin), these proteins do not sever actin filaments. Plays a role in the regulation of cell morphology and cytoskeletal organization. Forms, with CAPZB, the barbed end of the fast growing ends of actin filaments in the dynactin complex and stabilizes dynactin structure. The dynactin multiprotein complex activates the molecular motor dynein for ultra-processive transport along microtubules. This is F-actin-capping protein subunit beta from Mesocricetus auratus (Golden hamster).